Consider the following 336-residue polypeptide: IgLON family member 5 (336 aa).

The N-terminal stretch at 1-30 (MPPPAPGARLRLLAAAALAGLAVISRGLLS) is a signal peptide. 3 consecutive Ig-like C2-type domains span residues 33 to 122 (LEFS…QPYT), 132 to 213 (PARI…VLVT), and 218 to 307 (PTIT…MRLL). Asn41, Asn49, Asn67, and Asn137 each carry an N-linked (GlcNAc...) asparagine glycan. Cys54 and Cys112 are joined by a disulfide. Cystine bridges form between Cys154–Cys195 and Cys238–Cys291. An N-linked (GlcNAc...) asparagine glycan is attached at Asn288.

Belongs to the immunoglobulin superfamily. IgLON family.

Its subcellular location is the secreted. The polypeptide is IgLON family member 5 (Iglon5) (Mus musculus (Mouse)).